A 185-amino-acid polypeptide reads, in one-letter code: GTP cyclohydrolase 1 (185 aa).

Positions 76, 79, and 147 each coordinate Zn(2+).

Belongs to the GTP cyclohydrolase I family. As to quaternary structure, toroid-shaped homodecamer, composed of two pentamers of five dimers.

It catalyses the reaction GTP + H2O = 7,8-dihydroneopterin 3'-triphosphate + formate + H(+). It participates in cofactor biosynthesis; 7,8-dihydroneopterin triphosphate biosynthesis; 7,8-dihydroneopterin triphosphate from GTP: step 1/1. The protein is GTP cyclohydrolase 1 of Clostridium perfringens (strain ATCC 13124 / DSM 756 / JCM 1290 / NCIMB 6125 / NCTC 8237 / Type A).